A 348-amino-acid chain; its full sequence is Protein RecA (348 aa).

69 to 76 (GPESSGKT) serves as a coordination point for ATP.

Belongs to the RecA family.

It localises to the cytoplasm. In terms of biological role, can catalyze the hydrolysis of ATP in the presence of single-stranded DNA, the ATP-dependent uptake of single-stranded DNA by duplex DNA, and the ATP-dependent hybridization of homologous single-stranded DNAs. It interacts with LexA causing its activation and leading to its autocatalytic cleavage. The protein is Protein RecA of Gluconacetobacter polyoxogenes (Acetobacter polyoxogenes).